Consider the following 180-residue polypeptide: CDP-archaeol synthase (180 aa).

The next 5 helical transmembrane spans lie at 5–25 (LVAT…AAVL), 54–74 (AVGT…AEPA), 78–98 (LGVD…FGAM), 118–138 (AFPG…VFVV), and 142–162 (WALA…TPIL).

This sequence belongs to the CDP-archaeol synthase family. Mg(2+) serves as cofactor.

The protein localises to the cell membrane. It catalyses the reaction 2,3-bis-O-(geranylgeranyl)-sn-glycerol 1-phosphate + CTP + H(+) = CDP-2,3-bis-O-(geranylgeranyl)-sn-glycerol + diphosphate. It participates in membrane lipid metabolism; glycerophospholipid metabolism. Its function is as follows. Catalyzes the formation of CDP-2,3-bis-(O-geranylgeranyl)-sn-glycerol (CDP-archaeol) from 2,3-bis-(O-geranylgeranyl)-sn-glycerol 1-phosphate (DGGGP) and CTP. This reaction is the third ether-bond-formation step in the biosynthesis of archaeal membrane lipids. The chain is CDP-archaeol synthase from Halorubrum lacusprofundi (strain ATCC 49239 / DSM 5036 / JCM 8891 / ACAM 34).